The sequence spans 250 residues: Acyl-coenzyme A diphosphatase fit1 (250 aa).

The Cytoplasmic portion of the chain corresponds to 1–23; it reads MTEKTASHYWNEETSILKLRRKD. The chain crosses the membrane as a helical span at residues 24–44; that stretch reads ILLFEIYATTLLLGSIYSIYV. Residues 45–58 lie on the Lumenal side of the membrane; the sequence is DKWSITSYFGNSKN. A helical membrane pass occupies residues 59–79; that stretch reads LINLIFVKRGWFWTSLVYFYH. The Cytoplasmic portion of the chain corresponds to 80–95; sequence AWDQKRNKIDFKFISR. Residues 96-116 form a helical membrane-spanning segment; that stretch reads YIVATLWWMFVTQWFIGPGLI. The Lumenal segment spans residues 117–160; it reads DRTFALSGGSCKNFDGDSSVFIPLTASTCKGLNGSWSGGHDLSG. An N-linked (GlcNAc...) asparagine glycan is attached at asparagine 149. Residue histidine 161 is part of the active site. The chain crosses the membrane as a helical span at residues 161–181; that stretch reads HVFLLTHSSLFMLSENFSFIL. At 182–191 the chain is on the cytoplasmic side; sequence NNGIKATSTK. The helical transmembrane segment at 192–212 threads the bilayer; the sequence is VLFGLLGLWWWMLFVTASFYH. Histidine 212 is an active-site residue. A topological domain (lumenal) is located at residue threonine 213. A helical membrane pass occupies residues 214–234; sequence TFEKCTGFFSGILEWSIVYVF. At 235–250 the chain is on the cytoplasmic side; sequence SSRMPAVADLLGSSDY.

Belongs to the FIT family. Fungal FIT2B/SCS3 subfamily.

It is found in the endoplasmic reticulum membrane. The enzyme catalyses an acyl-CoA + H2O = an acyl-4'-phosphopantetheine + adenosine 3',5'-bisphosphate + 2 H(+). It catalyses the reaction (9Z)-octadecenoyl-CoA + H2O = S-(9Z-octadecenoyl)-4'-phosphopantetheine + adenosine 3',5'-bisphosphate + 2 H(+). The catalysed reaction is (5Z,8Z,11Z,14Z)-eicosatetraenoyl-CoA + H2O = S-(5Z,8Z,11Z,14Z-eicosatetraenoyl)-4'-phosphopantetheine + adenosine 3',5'-bisphosphate + 2 H(+). It carries out the reaction hexadecanoyl-CoA + H2O = S-hexadecanoyl-4'-phosphopantetheine + adenosine 3',5'-bisphosphate + 2 H(+). In terms of biological role, fatty acyl-coenzyme A (CoA) diphosphatase that hydrolyzes fatty acyl-CoA to yield acyl-4'-phosphopantetheine and adenosine 3',5'-bisphosphate. Preferentially hydrolyzes unsaturated long-chain acyl-CoA substrates in the endoplasmic reticulum (ER) lumen. This catalytic activity is required for maintaining ER structure and for lipid droplets (LDs) biogenesis, which are lipid storage organelles involved in maintaining lipid and energy homeostasis. May directly bind to diacylglycerol (DAGs) and triacylglycerol, which is also important for LD biogenesis. May support directional budding of nacent LDs from the ER into the cytosol by reducing DAG levels at sites of LD formation. May play a role in the regulation of cell morphology and cytoskeletal organization. The polypeptide is Acyl-coenzyme A diphosphatase fit1 (Schizosaccharomyces pombe (strain 972 / ATCC 24843) (Fission yeast)).